A 140-amino-acid chain; its full sequence is uncharacterized protein (140 aa).

The next 2 membrane-spanning stretches (helical) occupy residues 33 to 53 and 59 to 79; these read LLYVFLFIIFANCVVDVKYYF and SLLFVYFFLTLIILLVSFMGF. The segment covering 89–104 has biased composition (basic and acidic residues); it reads EAEPDYRKKQESKNQD. Residues 89-140 are disordered; sequence EAEPDYRKKQESKNQDFLKSQSNEPLEYASSSAVELEKEKNTREGLTILESS. Polar residues predominate over residues 105-121; sequence FLKSQSNEPLEYASSSA.

The protein localises to the membrane. This is an uncharacterized protein from Schizosaccharomyces pombe (strain 972 / ATCC 24843) (Fission yeast).